Consider the following 92-residue polypeptide: Bombyxin A-9 (92 aa).

Positions 1–19 (MKLLLAIALMLTTVMWAST) are cleaved as a signal peptide. The residue at position 20 (glutamine 20) is a Pyrrolidone carboxylic acid. Disulfide bonds link cysteine 29–cysteine 79, cysteine 41–cysteine 92, and cysteine 78–cysteine 83. Residues 50 to 71 (SDAQFASYGSAWLMPYSEGRDQ) constitute a propeptide, c peptide like.

It belongs to the insulin family. Heterodimer of a B chain and an A chain linked by two disulfide bonds.

The protein resides in the secreted. Functionally, brain peptide responsible for activation of prothoracic glands to produce ecdysone in insects. The sequence is that of Bombyxin A-9 (BBXA9) from Bombyx mori (Silk moth).